The sequence spans 407 residues: Arylacetamide deacetylase-like 3 (407 aa).

The Involved in the stabilization of the negatively charged intermediate by the formation of the oxyanion hole motif lies at 119–121 (HGG). Active-site residues include Ser-193, Asp-347, and His-377.

This sequence belongs to the 'GDXG' lipolytic enzyme family.

This chain is Arylacetamide deacetylase-like 3 (AADACL3), found in Homo sapiens (Human).